The chain runs to 545 residues: Transducer protein Htr7 (545 aa).

Helical transmembrane passes span 10–30, 44–64, and 80–100; these read AVVA…AAAL, FWMA…SLML, and PLMA…LAIV. Residues 111-157 form a disordered region; the sequence is AQRRQEAEEERAEAERAREKAEQKQAEAERQTAEAESAKQDARERSA. The span at 123-157 shows a compositional bias: basic and acidic residues; that stretch reads EAERAREKAEQKQAEAERQTAEAESAKQDARERSA. One can recognise an HAMP domain in the interval 164–217; the sequence is ADLESQATEVGATLEAASDGDLTARVDATTDNAEIAEVATVVNDMLTTMERTID. In terms of domain architecture, Methyl-accepting transducer spans 236 to 476; sequence GAKEIQDASQ…RVVSSVDDIA (241 aa). Position 281 is a glutamate methyl ester (Glu) (E281). A disordered region spans residues 521-545; the sequence is LNEFRTEATGTAHGEATDAPAGQSD. Low complexity predominate over residues 527 to 539; it reads EATGTAHGEATDA.

Belongs to the methyl-accepting chemotaxis (MCP) protein family. In terms of processing, methylated by CheR.

The protein localises to the cell membrane. Functionally, potentially involved in chemo- or phototactic signal transduction. This chain is Transducer protein Htr7 (htr7), found in Halobacterium salinarum (strain ATCC 29341 / DSM 671 / R1).